Reading from the N-terminus, the 571-residue chain is Sulfite reductase [NADPH] hemoprotein beta-component (571 aa).

Cys-436, Cys-442, Cys-481, and Cys-485 together coordinate [4Fe-4S] cluster. Residue Cys-485 participates in siroheme binding.

The protein belongs to the nitrite and sulfite reductase 4Fe-4S domain family. Alpha(8)-beta(8). The alpha component is a flavoprotein, the beta component is a hemoprotein. Siroheme is required as a cofactor. [4Fe-4S] cluster serves as cofactor.

The catalysed reaction is hydrogen sulfide + 3 NADP(+) + 3 H2O = sulfite + 3 NADPH + 4 H(+). It functions in the pathway sulfur metabolism; hydrogen sulfide biosynthesis; hydrogen sulfide from sulfite (NADPH route): step 1/1. In terms of biological role, component of the sulfite reductase complex that catalyzes the 6-electron reduction of sulfite to sulfide. This is one of several activities required for the biosynthesis of L-cysteine from sulfate. The protein is Sulfite reductase [NADPH] hemoprotein beta-component of Bacillus velezensis (strain DSM 23117 / BGSC 10A6 / LMG 26770 / FZB42) (Bacillus amyloliquefaciens subsp. plantarum).